A 288-amino-acid chain; its full sequence is G1/S-specific cyclin-D2 (288 aa).

The 126-residue stretch at 26-151 (VLQNLLTIEE…VVLGKLKWNL (126 aa)) folds into the Cyclin N-terminal domain. Residues 264-288 (DQDGSKSEDELDQASTPTDVRDIDL) form a disordered region. Ser270 carries the phosphoserine modification. Thr279 bears the Phosphothreonine mark.

It belongs to the cyclin family. Cyclin D subfamily. Interacts with either CDK4 or CDK6 protein kinase to form a serine/threonine kinase holoenzyme complex. The cyclin subunit imparts substrate specificity to the complex. Post-translationally, phosphorylation at Thr-279 by MAP kinases is required for ubiquitination and degradation by the DCX(AMBRA1) complex. Ubiquitinated by the DCX(AMBRA1) complex during the transition from G1 to S cell phase, leading to its degradation: ubiquitination is dependent on Thr-279 phosphorylation. The DCX(AMBRA1) complex represents the major regulator of CCND2 stability during the G1/S transition. Polyubiquitinated by the SCF(FBXL2) complex, leading to proteasomal degradation.

The protein localises to the nucleus. It is found in the cytoplasm. Its subcellular location is the nucleus membrane. Regulatory component of the cyclin D2-CDK4 (DC) complex that phosphorylates and inhibits members of the retinoblastoma (RB) protein family including RB1 and regulates the cell-cycle during G(1)/S transition. Phosphorylation of RB1 allows dissociation of the transcription factor E2F from the RB/E2F complex and the subsequent transcription of E2F target genes which are responsible for the progression through the G(1) phase. Hypophosphorylates RB1 in early G(1) phase. Cyclin D-CDK4 complexes are major integrators of various mitogenenic and antimitogenic signals. The protein is G1/S-specific cyclin-D2 (CCND2) of Sus scrofa (Pig).